The following is an 82-amino-acid chain: Progonadoliberin-3 (82 aa).

A signal peptide spans 1–23 (MDLSSKTVVQVVMLALIAQVTFS). Residue glutamine 24 is modified to Pyrrolidone carboxylic acid. Residue glycine 33 is modified to Glycine amide.

The protein belongs to the GnRH family.

It is found in the secreted. In terms of biological role, stimulates the secretion of gonadotropins. The chain is Progonadoliberin-3 (gnrh3) from Oncorhynchus masou (Cherry salmon).